Reading from the N-terminus, the 149-residue chain is Calmodulin (149 aa).

Thr-2 carries the N-acetylthreonine modification. 4 consecutive EF-hand domains span residues 8–43 (EQIAEFKEAFSLFDKDGDGTITTKELGTVMRSLGQN), 44–79 (PTEAELQDMINEVDADGNGTIDFPEFLTMMARKMKE), 81–116 (DSEEEIREAFRVFDKDGNGFISAAELRHVMTNLGEK), and 117–149 (LTDEEVDEMIREADIDGDGQVNYEEFVAMMTSK). Residues Asp-21, Asp-23, Asp-25, Thr-27, Glu-32, Asp-57, Asp-59, Asn-61, Thr-63, Glu-68, Asp-94, Asp-96, Asn-98, and Glu-105 each contribute to the Ca(2+) site. Position 116 is an N6,N6,N6-trimethyllysine (Lys-116). Residues Asp-130, Asp-132, Asp-134, Gln-136, and Glu-141 each coordinate Ca(2+).

It belongs to the calmodulin family.

Calmodulin mediates the control of a large number of enzymes, ion channels and other proteins by Ca(2+). Among the enzymes to be stimulated by the calmodulin-Ca(2+) complex are a number of protein kinases and phosphatases. This is Calmodulin from Halichondria okadai (Marine sponge).